A 360-amino-acid chain; its full sequence is Photosystem II protein D1 (360 aa).

Residues 1-28 (MTTTLQRRESANLWERFCNWVTSTDNRL) lie on the Cytoplasmic side of the membrane. Residues 29 to 46 (YVGWFGVIMIPTLLAATI) traverse the membrane as a helical segment. Topologically, residues 47-117 (CFVIAFIAAP…NGGPYQLIIF (71 aa)) are lumenal. His-118 contacts chlorophyll a. A helical membrane pass occupies residues 118–133 (HFLLGASCYMGRQWEL). Pheophytin a contacts are provided by Tyr-126 and Gln-130. Residues 134–141 (SYRLGMRP) lie on the Cytoplasmic side of the membrane. A helical membrane pass occupies residues 142–156 (WICVAYSAPLASAFA). Tyr-147 contributes to the pheophytin a binding site. Over 157–196 (VFLIYPIGQGSFSDGMPLGISGTFNFMIVFQAEHNILMHP) the chain is Lumenal. [CaMn4O5] cluster is bound by residues Asp-170 and Glu-189. Residues 197-218 (FHQLGVAGVFGGALFCAMHGSL) form a helical membrane-spanning segment. His-198 is a chlorophyll a binding site. A pheophytin a-binding site is contributed by Met-214. A quinone-binding positions include His-215 and 264 to 265 (SF). Residue His-215 participates in Fe cation binding. Topologically, residues 219–273 (VTSSLIRETTETESANYGYKFGQEEETYNIVAAHGYFGRLIFQYASFNNSRSLHF) are cytoplasmic. A Fe cation-binding site is contributed by His-272. A helical membrane pass occupies residues 274 to 288 (FLAAWRVVGVWFAAL). Residues 289 to 360 (GISTMAFNLN…VAMIAPSING (72 aa)) lie on the Lumenal side of the membrane. [CaMn4O5] cluster-binding residues include His-332, Glu-333, Asp-342, and Ala-344. Residues 345–360 (SAESAPVAMIAPSING) constitute a propeptide that is removed on maturation.

This sequence belongs to the reaction center PufL/M/PsbA/D family. As to quaternary structure, PSII is composed of 1 copy each of membrane proteins PsbA, PsbB, PsbC, PsbD, PsbE, PsbF, PsbH, PsbI, PsbJ, PsbK, PsbL, PsbM, PsbT, PsbX, PsbY, PsbZ, Psb30/Ycf12, peripheral proteins PsbO, CyanoQ (PsbQ), PsbU, PsbV and a large number of cofactors. It forms dimeric complexes. Requires The D1/D2 heterodimer binds P680, chlorophylls that are the primary electron donor of PSII, and subsequent electron acceptors. It shares a non-heme iron and each subunit binds pheophytin, quinone, additional chlorophylls, carotenoids and lipids. D1 provides most of the ligands for the Mn4-Ca-O5 cluster of the oxygen-evolving complex (OEC). There is also a Cl(-1) ion associated with D1 and D2, which is required for oxygen evolution. The PSII complex binds additional chlorophylls, carotenoids and specific lipids. as cofactor. C-terminally processed by CtpA; processing is essential to allow assembly of the oxygen-evolving complex and thus photosynthetic growth. In terms of processing, tyr-161 forms a radical intermediate that is referred to as redox-active TyrZ, YZ or Y-Z.

Its subcellular location is the cellular thylakoid membrane. It carries out the reaction 2 a plastoquinone + 4 hnu + 2 H2O = 2 a plastoquinol + O2. Functionally, photosystem II (PSII) is a light-driven water:plastoquinone oxidoreductase that uses light energy to abstract electrons from H(2)O, generating O(2) and a proton gradient subsequently used for ATP formation. It consists of a core antenna complex that captures photons, and an electron transfer chain that converts photonic excitation into a charge separation. The D1/D2 (PsbA/PsbD) reaction center heterodimer binds P680, the primary electron donor of PSII as well as several subsequent electron acceptors. This chain is Photosystem II protein D1, found in Thermostichus vulcanus (Synechococcus vulcanus).